We begin with the raw amino-acid sequence, 244 residues long: INO80 complex subunit E (244 aa).

Positions 10–54 (DYKKKYRNLKRKLKFLIYEHECFQEELRKAQRKLLKVSRDKSFLL) form a coiled coil. 2 disordered regions span residues 59–187 (QYEN…PLTF) and 222–244 (FSDA…DIPE). 2 stretches are compositionally biased toward low complexity: residues 99–115 (PPLG…LPPS) and 122–136 (ASRA…LASP). Residues 157-171 (RPKREKRPRLPRKLK) are compositionally biased toward basic residues. Residues Lys159 and Lys171 each participate in a glycyl lysine isopeptide (Lys-Gly) (interchain with G-Cter in SUMO2) cross-link. Residues 230 to 244 (DALDGDDDLVIDIPE) are compositionally biased toward acidic residues.

As to quaternary structure, component of the chromatin remodeling INO80 complex; specifically part of a complex module associated with the N-terminus of INO80.

It localises to the nucleus. Putative regulatory component of the chromatin remodeling INO80 complex which is involved in transcriptional regulation, DNA replication and probably DNA repair. This Bos taurus (Bovine) protein is INO80 complex subunit E (INO80E).